The chain runs to 262 residues: Thiazole synthase (262 aa).

Residue Lys-104 is the Schiff-base intermediate with DXP of the active site. 1-deoxy-D-xylulose 5-phosphate contacts are provided by residues Gly-165, 191–192 (AG), and 213–214 (NT).

The protein belongs to the ThiG family. Homotetramer. Forms heterodimers with either ThiH or ThiS.

It localises to the cytoplasm. It catalyses the reaction [ThiS sulfur-carrier protein]-C-terminal-Gly-aminoethanethioate + 2-iminoacetate + 1-deoxy-D-xylulose 5-phosphate = [ThiS sulfur-carrier protein]-C-terminal Gly-Gly + 2-[(2R,5Z)-2-carboxy-4-methylthiazol-5(2H)-ylidene]ethyl phosphate + 2 H2O + H(+). It functions in the pathway cofactor biosynthesis; thiamine diphosphate biosynthesis. In terms of biological role, catalyzes the rearrangement of 1-deoxy-D-xylulose 5-phosphate (DXP) to produce the thiazole phosphate moiety of thiamine. Sulfur is provided by the thiocarboxylate moiety of the carrier protein ThiS. In vitro, sulfur can be provided by H(2)S. The polypeptide is Thiazole synthase (Nitrosococcus oceani (strain ATCC 19707 / BCRC 17464 / JCM 30415 / NCIMB 11848 / C-107)).